A 375-amino-acid polypeptide reads, in one-letter code: Putative glutamate--cysteine ligase 2 (375 aa).

The protein belongs to the glutamate--cysteine ligase type 2 family. YbdK subfamily.

The enzyme catalyses L-cysteine + L-glutamate + ATP = gamma-L-glutamyl-L-cysteine + ADP + phosphate + H(+). Its function is as follows. ATP-dependent carboxylate-amine ligase which exhibits weak glutamate--cysteine ligase activity. This Azoarcus sp. (strain BH72) protein is Putative glutamate--cysteine ligase 2.